A 510-amino-acid polypeptide reads, in one-letter code: Aspartate kinase FUB3 (510 aa).

2 consecutive ACT domains span residues 372 to 440 (ILSN…VLPD) and 446 to 510 (LVGA…KNAM).

Belongs to the aspartokinase family.

It carries out the reaction L-aspartate + ATP = 4-phospho-L-aspartate + ADP. Its pathway is mycotoxin biosynthesis. Aspartate kinase; part of the gene cluster that mediates the biosynthesis of fusaric acid, a mycotoxin with low to moderate toxicity to animals and humans, but with high phytotoxic properties. L-aspartate is suggested as fusaric acid amino acid precursor that is activated and further processed to O-acetyl-L-homoserine by cluster enzymes aspartate kinase FUB3 and homoserine O-acetyltransferase FUB5, as well as enzymes of the primary metabolism. The polyketide synthase (PKS) FUB1 generates the triketide trans-2-hexenal which is presumptively released by the hydrolase FUB4 and linked to the NRPS-bound amino acid precursor by NAD(P)-dependent dehydrogenase FUB6. FUB1, FUB4, and the non-canonical NRPS Fub8 may form an enzyme complex. Further processing of the NRPS-bound intermediate might be carried out by FUB6 and the sulfhydrylase FUB7, enabling a spontaneous electrocyclization to close the carbon backbone of fusaric acid. Dihydrofusaric acid is likely to be released via reduction by the thioester reductase (TR) domain of FUB8 whereupon the final oxidation to fusaric acid may (also) be performed by the FMN-dependent dehydrogenase FUB9. In Gibberella moniliformis (strain M3125 / FGSC 7600) (Maize ear and stalk rot fungus), this protein is Aspartate kinase FUB3.